A 486-amino-acid polypeptide reads, in one-letter code: Malonate-semialdehyde dehydrogenase 1 (486 aa).

NAD(+) contacts are provided by Phe154, Lys178, Glu181, Arg182, and Ser231. Cys286 serves as the catalytic Nucleophile. An NAD(+)-binding site is contributed by Glu386.

The protein belongs to the aldehyde dehydrogenase family. IolA subfamily. In terms of assembly, homotetramer.

It carries out the reaction 3-oxopropanoate + NAD(+) + CoA + H2O = hydrogencarbonate + acetyl-CoA + NADH + H(+). The enzyme catalyses 2-methyl-3-oxopropanoate + NAD(+) + CoA + H2O = propanoyl-CoA + hydrogencarbonate + NADH + H(+). It participates in polyol metabolism; myo-inositol degradation into acetyl-CoA; acetyl-CoA from myo-inositol: step 7/7. Catalyzes the oxidation of malonate semialdehyde (MSA) and methylmalonate semialdehyde (MMSA) into acetyl-CoA and propanoyl-CoA, respectively. Is involved in a myo-inositol catabolic pathway. Bicarbonate, and not CO2, is the end-product of the enzymatic reaction. The sequence is that of Malonate-semialdehyde dehydrogenase 1 from Bacillus thuringiensis (strain Al Hakam).